A 461-amino-acid chain; its full sequence is tRNA modification GTPase MnmE (461 aa).

Positions 22, 87, and 126 each coordinate (6S)-5-formyl-5,6,7,8-tetrahydrofolate. The 161-residue stretch at 222–382 (GITAVIAGKP…LENKLYEILI (161 aa)) folds into the TrmE-type G domain. Asn-232 serves as a coordination point for K(+). GTP-binding positions include 232-237 (NVGKSS), 251-257 (TDIPGTT), 276-279 (DTAG), and 363-365 (SAR). Ser-236 lines the Mg(2+) pocket. The K(+) site is built by Thr-251, Ile-253, and Thr-256. Thr-257 is a Mg(2+) binding site. Lys-461 serves as a coordination point for (6S)-5-formyl-5,6,7,8-tetrahydrofolate.

This sequence belongs to the TRAFAC class TrmE-Era-EngA-EngB-Septin-like GTPase superfamily. TrmE GTPase family. Homodimer. Heterotetramer of two MnmE and two MnmG subunits. K(+) serves as cofactor.

The protein resides in the cytoplasm. Functionally, exhibits a very high intrinsic GTPase hydrolysis rate. Involved in the addition of a carboxymethylaminomethyl (cmnm) group at the wobble position (U34) of certain tRNAs, forming tRNA-cmnm(5)s(2)U34. The polypeptide is tRNA modification GTPase MnmE (Carboxydothermus hydrogenoformans (strain ATCC BAA-161 / DSM 6008 / Z-2901)).